We begin with the raw amino-acid sequence, 544 residues long: Membrane protein insertase YidC (544 aa).

5 consecutive transmembrane segments (helical) span residues 13–33 (LSLFLIGLFMLINDIFSSNIL), 343–363 (WGLSIIFLTIVVRILIFPLTF), 409–429 (LGGCLPVILQLPIFFALYSLV), 461–481 (LYFVSWTDIRILPFIMMFTQL), and 506–526 (MPIMFFFILYNMPSGLLIYWI).

Belongs to the OXA1/ALB3/YidC family. Type 1 subfamily. As to quaternary structure, interacts with the Sec translocase complex via SecD. Specifically interacts with transmembrane segments of nascent integral membrane proteins during membrane integration.

The protein localises to the cell inner membrane. In terms of biological role, required for the insertion and/or proper folding and/or complex formation of integral membrane proteins into the membrane. Involved in integration of membrane proteins that insert both dependently and independently of the Sec translocase complex, as well as at least some lipoproteins. Aids folding of multispanning membrane proteins. In Borreliella burgdorferi (strain ATCC 35210 / DSM 4680 / CIP 102532 / B31) (Borrelia burgdorferi), this protein is Membrane protein insertase YidC.